We begin with the raw amino-acid sequence, 82 residues long: Turripeptide IX-04 (82 aa).

The signal sequence occupies residues 1-21 (MGFYMLLTVALLLTSLMNVEA). A propeptide spanning residues 22–39 (TPVDQAERSALEKSGLGN) is cleaved from the precursor. Cystine bridges form between Cys-48–Cys-70, Cys-55–Cys-74, and Cys-60–Cys-81.

As to expression, expressed by the venom duct.

It localises to the secreted. The polypeptide is Turripeptide IX-04 (Gemmula speciosa (Splendid gem-turris)).